A 29-amino-acid polypeptide reads, in one-letter code: Cytochrome b6-f complex subunit 8 (29 aa).

A helical transmembrane segment spans residues 3-23 (IVDIAWAALMVVFTFSLSLVV).

The protein belongs to the PetN family. In terms of assembly, the 4 large subunits of the cytochrome b6-f complex are cytochrome b6, subunit IV (17 kDa polypeptide, PetD), cytochrome f and the Rieske protein, while the 4 small subunits are PetG, PetL, PetM and PetN. The complex functions as a dimer.

The protein localises to the plastid. The protein resides in the chloroplast thylakoid membrane. Its function is as follows. Component of the cytochrome b6-f complex, which mediates electron transfer between photosystem II (PSII) and photosystem I (PSI), cyclic electron flow around PSI, and state transitions. In Gnetum parvifolium (Small-leaved jointfir), this protein is Cytochrome b6-f complex subunit 8.